The sequence spans 56 residues: Large ribosomal subunit protein bL33 (56 aa).

This sequence belongs to the bacterial ribosomal protein bL33 family.

This Haemophilus influenzae (strain 86-028NP) protein is Large ribosomal subunit protein bL33.